Here is a 145-residue protein sequence, read N- to C-terminus: Large ribosomal subunit protein bL35c (145 aa).

The N-terminal 56 residues, 1–56, are a transit peptide targeting the chloroplast; the sequence is MASLSMASVNVSFCHPLRSSSPKVSLRSSVHFATSLSSSHSISGLRAVLPLKISTV.

This sequence belongs to the bacterial ribosomal protein bL35 family. Part of the 50S ribosomal subunit.

It localises to the plastid. The protein localises to the chloroplast. This chain is Large ribosomal subunit protein bL35c, found in Arabidopsis thaliana (Mouse-ear cress).